The chain runs to 419 residues: Transcription factor 7 (419 aa).

Gly residues predominate over residues 1-12 (MPQLDSGGGGAG). The tract at residues 1–60 (MPQLDSGGGGAGRGDDLGAPDELLAFQDEGEEQDDKNRDSPVGPERDLAELKSSLVNESE) is CTNNB1-binding. Disordered stretches follow at residues 1-111 (MPQL…LKAP) and 134-200 (PASG…SGFY). 2 stretches are compositionally biased toward basic and acidic residues: residues 35–50 (DKNRDSPVGPERDLAE) and 86–109 (LGREHTSQRLFPDKLPESLEDGLK). Residues 143–158 (QPQPPLHNKPGQPPHG) show a composition bias toward pro residues. The segment at residues 304–372 (IKKPLNAFML…LHMQLYPGWS (69 aa)) is a DNA-binding region (HMG box). The tract at residues 374–406 (RDNYGKKKRRSREKHQESTTGGKRNAFGTYPEK) is disordered. A Nuclear localization signal motif is present at residues 379-385 (KKKRRSR).

This sequence belongs to the TCF/LEF family. Binds the armadillo repeat of CTNNB1 and forms a stable complex. Binds TLE5, TLE1, TLE2, TLE3 and TLE4. Interacts with MLLT11. Interacts with DAZAP2. In terms of assembly, interacts (via N-terminus) with SOX13; inhibits WNT-mediated transcriptional activity. In terms of tissue distribution, T-cell specific. Expressed in triple negative 2 subpopulations of T-cells and both the gamma-delta and alpha-beta T-cell lineages. Expressed in Il7 receptor positive innate-like T-cells in the mesenteric lymph nodes and spleen (at protein level).

It is found in the nucleus. Its function is as follows. Transcriptional activator involved in T-cell lymphocyte differentiation. Necessary for the survival of CD4(+) CD8(+) immature thymocytes. Isoforms lacking the N-terminal CTNNB1 binding domain cannot fulfill this role. Binds to the T-lymphocyte-specific enhancer element (5'-WWCAAAG-3') found in the promoter of the CD3E gene. Represses expression of the T-cell receptor gamma gene in alpha-beta T-cell lineages. Inhibits the developmental program of IL17A effector gamma-delta T-cell subsets via regulating the transcription of T-cell lineage effector proteins. Required for the development of natural killer receptor-positive lymphoid tissue inducer T-cells. TLE1, TLE2, TLE3 and TLE4 repress transactivation mediated by TCF7 and CTNNB1. May also act as feedback transcriptional repressor of CTNNB1 and TCF7L2 target genes. This chain is Transcription factor 7, found in Mus musculus (Mouse).